A 194-amino-acid polypeptide reads, in one-letter code: Granulocyte colony-stimulating factor (194 aa).

Residues 1–20 (KLMALQLLLWHSALWMVQEA) form the signal peptide. 2 disulfide bridges follow: Cys-56/Cys-62 and Cys-84/Cys-94. O-linked (GalNAc...) threonine glycosylation is present at Thr-153.

This sequence belongs to the IL-6 superfamily. As to quaternary structure, monomer. In terms of processing, O-glycosylated.

Its subcellular location is the secreted. Granulocyte/macrophage colony-stimulating factors are cytokines that act in hematopoiesis by controlling the production, differentiation, and function of 2 related white cell populations of the blood, the granulocytes and the monocytes-macrophages. This CSF induces granulocytes. The protein is Granulocyte colony-stimulating factor (CSF3) of Felis catus (Cat).